Consider the following 319-residue polypeptide: DNA-directed RNA polymerase subunit alpha (319 aa).

The alpha N-terminal domain (alpha-NTD) stretch occupies residues 1-227 (MKEFIFPMKI…KHMNMLTNIS (227 aa)). The interval 242-319 (LMEKLTFSIE…NIGEQRSSEV (78 aa)) is alpha C-terminal domain (alpha-CTD).

This sequence belongs to the RNA polymerase alpha chain family. Homodimer. The RNAP catalytic core consists of 2 alpha, 1 beta, 1 beta' and 1 omega subunit. When a sigma factor is associated with the core the holoenzyme is formed, which can initiate transcription.

It catalyses the reaction RNA(n) + a ribonucleoside 5'-triphosphate = RNA(n+1) + diphosphate. In terms of biological role, DNA-dependent RNA polymerase catalyzes the transcription of DNA into RNA using the four ribonucleoside triphosphates as substrates. This is DNA-directed RNA polymerase subunit alpha from Hydrogenobaculum sp. (strain Y04AAS1).